An 873-amino-acid chain; its full sequence is Alanine--tRNA ligase (873 aa).

The Zn(2+) site is built by His-559, His-563, Cys-661, and His-665.

This sequence belongs to the class-II aminoacyl-tRNA synthetase family. The cofactor is Zn(2+).

It is found in the cytoplasm. It catalyses the reaction tRNA(Ala) + L-alanine + ATP = L-alanyl-tRNA(Ala) + AMP + diphosphate. Catalyzes the attachment of alanine to tRNA(Ala) in a two-step reaction: alanine is first activated by ATP to form Ala-AMP and then transferred to the acceptor end of tRNA(Ala). Also edits incorrectly charged Ser-tRNA(Ala) and Gly-tRNA(Ala) via its editing domain. This chain is Alanine--tRNA ligase, found in Acaryochloris marina (strain MBIC 11017).